The following is a 950-amino-acid chain: Sodium/calcium exchanger Calx (950 aa).

A signal peptide spans 1 to 22 (MQLLLKSIFTCALFVIFVYATA). At 23 to 120 (QSLLKVQETE…PQRNISVGDR (98 aa)) the chain is on the extracellular side. Residues N39, N47, and N114 are each glycosylated (N-linked (GlcNAc...) asparagine). A helical membrane pass occupies residues 121 to 141 (LVRGFVYFVLLIYLFVGVSII). Residues 142 to 179 (ADRFMAAIEAITSIERAVVVKGPNNTKQVMHVRIWNET) are Cytoplasmic-facing. Residues 180 to 200 (VANLTLMALGSSAPEILLSVI) form a helical membrane-spanning segment. Residues 201–216 (EIYAKDFESGDLGPGT) lie on the Extracellular side of the membrane. A helical membrane pass occupies residues 217–237 (IVGSAAYNLFMIIAVCMIWIP). The Cytoplasmic segment spans residues 238 to 257 (AGEVRRIRHLRVFFVTALFS). The next 2 helical transmembrane spans lie at 258-278 (VFAYVWLWLILSVFTPGVILV) and 279-299 (WEAIVTLLFFPLTVLWAYIAE). Residues 300–749 (RRLLVYKYMD…NDDEEEEVPS (450 aa)) are Cytoplasmic-facing. The tract at residues 301–318 (RLLVYKYMDKNYRVNKRG) is corresponds to the exchanger inhibitory peptide (XIP) found in other sodium/calcium exchange proteins and thought to be involved in calmodulin binding. The 112-residue stretch at 440-551 (DPIRMYFEPG…MIATVMILDD (112 aa)) folds into the Calx-beta 1 domain. The Ca(2+) site is built by E455, D490, D515, D516, V518, E520, E523, D550, D551, and D552. The Calx-beta 2 domain maps to 555–694 (GIFAFTDSVF…LTTAYVRIRE (140 aa)). The chain crosses the membrane as a helical span at residues 750-770 (CFSYVSHFVCLFWKVLFAFVP). Topologically, residues 771-775 (PTDIC) are extracellular. Residues 776–796 (GGYVTFVVSIFVIGVITAIIG) traverse the membrane as a helical segment. Over 797–813 (DAASYFGCALNIKDSVT) the chain is Cytoplasmic. A helical membrane pass occupies residues 814-834 (AILFVALGTSIPDTFASMIAA). At 835-848 (KHDEGADNCIGNVT) the chain is on the extracellular side. N846 carries an N-linked (GlcNAc...) asparagine glycan. The chain crosses the membrane as a helical span at residues 849–869 (GSNAVNVFLGIGLAWTIAAVY). The Cytoplasmic segment spans residues 870–883 (HSSHGMTFNVEPGT). The helical transmembrane segment at 884-904 (IGFAVALFCGEALIAIMLIMF) threads the bilayer. The Extracellular segment spans residues 905 to 923 (RRWHKGIGAELGGPKVSKY). Residues 924–944 (ISAAILVFLWVFYVVICILEA) form a helical membrane-spanning segment. Over 945–950 (YDVIRV) the chain is Cytoplasmic.

Belongs to the Ca(2+):cation antiporter (CaCA) (TC 2.A.19) family. SLC8 subfamily. Ubiquitously expressed with higher expression in head compared to body (at protein level). Enriched in photoreceptor cells of the eye (at protein level). In the adult head, expressed in retina, optic ganglia and all neuronal tissues.

The protein localises to the cell membrane. Its subcellular location is the cell projection. It is found in the rhabdomere membrane. It catalyses the reaction Ca(2+)(in) + 3 Na(+)(out) = Ca(2+)(out) + 3 Na(+)(in). With respect to regulation, activated by a Na(+) electrochemical gradient but also undergoes Na(2+)-dependent inactivation. Inhibited by micromolar levels of cytoplasmic Ca(2+), which is the opposite of most characterized mammalian homologs. Exhibits greater extent of inhibition by Ca(2+) than isoform D/1.2. Its activity is regulated as follows. Exhibits greater Na(2+)-dependent inactivation than isoform A/1.1, probably due to greater stability of the inactive Na(2+)-bound form. Functionally, na(+)/Ca(2+) antiporter that couples the energy of a Na(+) electrochemical gradient to the movement of Ca(2+) against an electrochemical gradient across a membrane, which contributes to the regulation of cytoplasmic Ca(2+) levels. Mediates Na(+)/Ca(2+) exchange in photoreceptor cells and involved in controlling Ca(2+) levels during phototransduction, affecting magnitude of the photoresponse, activation kinetics, signal amplification, response termination, and light adaptation. Light induced depolarization of photoreceptor cells, resulting in Na(+) and Ca(2+) entry through trp/transient receptor potential protein channels, is essential for photoreceptor cell function but may result in toxic levels of cytoplasmic Ca(2+). Na(+)/Ca(2+) antiporter regulation of Ca(2+) levels protects photoreceptor cells from light-dependent retinal degeneration. The protein is Sodium/calcium exchanger Calx of Drosophila melanogaster (Fruit fly).